Here is a 262-residue protein sequence, read N- to C-terminus: Hydroxyethylthiazole kinase (262 aa).

Methionine 50 lines the substrate pocket. ATP is bound by residues arginine 125 and threonine 171. Residue glycine 198 participates in substrate binding.

The protein belongs to the Thz kinase family. The cofactor is Mg(2+).

It catalyses the reaction 5-(2-hydroxyethyl)-4-methylthiazole + ATP = 4-methyl-5-(2-phosphooxyethyl)-thiazole + ADP + H(+). Its pathway is cofactor biosynthesis; thiamine diphosphate biosynthesis; 4-methyl-5-(2-phosphoethyl)-thiazole from 5-(2-hydroxyethyl)-4-methylthiazole: step 1/1. In terms of biological role, catalyzes the phosphorylation of the hydroxyl group of 4-methyl-5-beta-hydroxyethylthiazole (THZ). The sequence is that of Hydroxyethylthiazole kinase from Citrobacter koseri (strain ATCC BAA-895 / CDC 4225-83 / SGSC4696).